The chain runs to 129 residues: Small ribosomal subunit protein uS11c (129 aa).

It belongs to the universal ribosomal protein uS11 family. Part of the 30S ribosomal subunit.

The protein localises to the plastid. It is found in the chloroplast. The polypeptide is Small ribosomal subunit protein uS11c (Oltmannsiellopsis viridis (Marine flagellate)).